The following is a 77-amino-acid chain: Large ribosomal subunit protein uL29 (77 aa).

Belongs to the universal ribosomal protein uL29 family.

The protein is Large ribosomal subunit protein uL29 (rpmC) of Mycobacterium bovis (strain ATCC BAA-935 / AF2122/97).